Here is a 240-residue protein sequence, read N- to C-terminus: Probable transcriptional regulatory protein OEOE_0768 (240 aa).

Positions 1–21 (MSGHSKWHNIQGRKNAQDAKR) are disordered.

The protein belongs to the TACO1 family.

It localises to the cytoplasm. The polypeptide is Probable transcriptional regulatory protein OEOE_0768 (Oenococcus oeni (strain ATCC BAA-331 / PSU-1)).